Reading from the N-terminus, the 542-residue chain is Probable myosin-binding protein 6 (542 aa).

An N-terminal signal peptide occupies residues 1-21 (MYIQLLCFFLFLFLLLQATMS). The helical transmembrane segment at 39–59 (FLIYTVLEWSLIVFLFIDGVI) threads the bilayer. Residues 219 to 239 (SFLAPAPSPRVSHNKLSENES) form a disordered region. The GTD-binding domain occupies 300-398 (SILNQLKKEV…ELEAEFEVYR (99 aa)). A disordered region spans residues 419–480 (GNASAYDDCQ…DEEKGSESKE (62 aa)). A compositionally biased stretch (polar residues) spans 437 to 456 (AVSSSNQQENGENIDQNGQS). Basic and acidic residues predominate over residues 471–480 (DEEKGSESKE).

It is found in the membrane. Its function is as follows. Probable membrane-anchored myosin receptors. This is Probable myosin-binding protein 6 from Arabidopsis thaliana (Mouse-ear cress).